The sequence spans 180 residues: ATP-dependent protease subunit HslV (180 aa).

Residue threonine 6 is part of the active site. Residues glycine 162, cysteine 165, and threonine 168 each coordinate Na(+).

Belongs to the peptidase T1B family. HslV subfamily. As to quaternary structure, a double ring-shaped homohexamer of HslV is capped on each side by a ring-shaped HslU homohexamer. The assembly of the HslU/HslV complex is dependent on binding of ATP.

It localises to the cytoplasm. It catalyses the reaction ATP-dependent cleavage of peptide bonds with broad specificity.. Its activity is regulated as follows. Allosterically activated by HslU binding. In terms of biological role, protease subunit of a proteasome-like degradation complex believed to be a general protein degrading machinery. The polypeptide is ATP-dependent protease subunit HslV (Oleidesulfovibrio alaskensis (strain ATCC BAA-1058 / DSM 17464 / G20) (Desulfovibrio alaskensis)).